A 389-amino-acid chain; its full sequence is Probable nitrate transporter NarT (389 aa).

Helical transmembrane passes span 14-34 (TLSLVVGFMAWSIIAPLMPFI), 45-65 (ISIILAIPVILGSVLRVPFGY), 69-89 (IVGAKWVFFTSFIVLLFPIFF), 97-117 (GMLMASGFFLGVGGAIFSVGV), 139-159 (GNIGTAVSSFLAPPIAGIIGW), 161-181 (TTVRSYLIIIALFALIMFIFG), 211-231 (WYFITFGAFVAFGIFLPNYLV), 246-266 (GVFIALATFLRPIGGILGDKF), 268-288 (AVKVLMIDFVVMIIGAIILGI), 294-314 (LFTVGCLTISICAGIGNGLIF), 331-351 (IVSMMGGLGGFFPPLVITYVA), and 353-373 (LTGSSHLAFIFLAVFGCIALF).

This sequence belongs to the major facilitator superfamily. Nitrate/nitrite porter (TC 2.A.1.8) family.

The protein resides in the cell membrane. Functionally, probably required for nitrate uptake under anoxic conditions. Also possibly involved in excretion of nitrite produced by the dissimilatory reduction of nitrate. The sequence is that of Probable nitrate transporter NarT (narT) from Staphylococcus aureus (strain bovine RF122 / ET3-1).